Here is a 155-residue protein sequence, read N- to C-terminus: UPF0178 protein Clos_2709 (155 aa).

The protein belongs to the UPF0178 family.

This is UPF0178 protein Clos_2709 from Alkaliphilus oremlandii (strain OhILAs) (Clostridium oremlandii (strain OhILAs)).